A 378-amino-acid chain; its full sequence is Histidine decarboxylase (378 aa).

Histidine 120 lines the substrate pocket. An N6-(pyridoxal phosphate)lysine modification is found at lysine 233. The active site involves serine 323.

This sequence belongs to the group II decarboxylase family. Homotetramer. Pyridoxal 5'-phosphate serves as cofactor.

The enzyme catalyses L-histidine + H(+) = histamine + CO2. This chain is Histidine decarboxylase (hdc), found in Morganella morganii (Proteus morganii).